Here is a 135-residue protein sequence, read N- to C-terminus: Retinol-binding protein 1 (135 aa).

Positions 22 to 32 are important for interaction with STRA6; it reads RALDVNVALRK. Positions 41, 63, and 109 each coordinate all-trans-retinol.

This sequence belongs to the calycin superfamily. Fatty-acid binding protein (FABP) family. As to quaternary structure, interacts (only as retinol-free apoprotein) with STRA6.

The protein localises to the cytoplasm. The protein resides in the lipid droplet. In terms of biological role, cytoplasmic retinol-binding protein. Accepts retinol from the transport protein STRA6, and thereby contributes to retinol uptake, storage and retinoid homeostasis. This chain is Retinol-binding protein 1 (Rbp1), found in Rattus norvegicus (Rat).